A 1152-amino-acid chain; its full sequence is Nucleolar protein 6 (1152 aa).

Disordered regions lie at residues 1-30 (MPSA…DPEV) and 36-55 (EGMD…EPPA). Residue Ser-65 is modified to Phosphoserine. The stretch at 92 to 128 (LLRLQVEELLKEVRLSEKKKERIDNFLKEVTKRIQKV) forms a coiled coil. A phosphoserine mark is found at Ser-292 and Ser-817.

Belongs to the NRAP family. Part of the small subunit (SSU) processome, composed of more than 70 proteins and the RNA chaperone small nucleolar RNA (snoRNA) U3. Interacts with RRP7A; required for NOL6 localization to nucleolus. As to expression, ubiquitously expressed.

The protein resides in the nucleus. The protein localises to the nucleolus. Its subcellular location is the chromosome. Its function is as follows. Part of the small subunit (SSU) processome, first precursor of the small eukaryotic ribosomal subunit. During the assembly of the SSU processome in the nucleolus, many ribosome biogenesis factors, an RNA chaperone and ribosomal proteins associate with the nascent pre-rRNA and work in concert to generate RNA folding, modifications, rearrangements and cleavage as well as targeted degradation of pre-ribosomal RNA by the RNA exosome. The sequence is that of Nucleolar protein 6 (Nol6) from Mus musculus (Mouse).